Reading from the N-terminus, the 1054-residue chain is Isoleucine--tRNA ligase (1054 aa).

The 'HIGH' region motif lies at 58-68 (PFANGLPHYGH). A 'KMSKS' region motif is present at residues 627-631 (KMSKS). Residue lysine 630 participates in ATP binding.

The protein belongs to the class-I aminoacyl-tRNA synthetase family. IleS type 2 subfamily. Monomer. Zn(2+) serves as cofactor.

It localises to the cytoplasm. It catalyses the reaction tRNA(Ile) + L-isoleucine + ATP = L-isoleucyl-tRNA(Ile) + AMP + diphosphate. In terms of biological role, catalyzes the attachment of isoleucine to tRNA(Ile). As IleRS can inadvertently accommodate and process structurally similar amino acids such as valine, to avoid such errors it has two additional distinct tRNA(Ile)-dependent editing activities. One activity is designated as 'pretransfer' editing and involves the hydrolysis of activated Val-AMP. The other activity is designated 'posttransfer' editing and involves deacylation of mischarged Val-tRNA(Ile). The polypeptide is Isoleucine--tRNA ligase (Corynebacterium efficiens (strain DSM 44549 / YS-314 / AJ 12310 / JCM 11189 / NBRC 100395)).